The chain runs to 165 residues: Lithostathine (165 aa).

Residues Met-1–Gly-21 form the signal peptide. Gln-22 is modified (pyrrolidone carboxylic acid). Residues Ile-33–Phe-163 form the C-type lectin domain. Cystine bridges form between Cys-35-Cys-46, Cys-63-Cys-161, and Cys-136-Cys-153. The N-linked (GlcNAc...) asparagine glycan is linked to Asn-129.

In terms of tissue distribution, expressed only in regenerating islets, but not in normal pancreatic islets, insulinomas or regenerating liver.

Its subcellular location is the secreted. Its function is as follows. Might act as an inhibitor of spontaneous calcium carbonate precipitation. This is Lithostathine (Reg1) from Rattus norvegicus (Rat).